Consider the following 512-residue polypeptide: Apolipoprotein N-acyltransferase (512 aa).

Transmembrane regions (helical) follow at residues leucine 5 to alanine 25, phenylalanine 56 to isoleucine 76, valine 92 to leucine 112, leucine 118 to alanine 138, phenylalanine 168 to alanine 188, and serine 195 to alanine 215. The CN hydrolase domain maps to leucine 233–glycine 477. Catalysis depends on glutamate 271, which acts as the Proton acceptor. Residue lysine 337 is part of the active site. The active-site Nucleophile is cysteine 389. Residues threonine 487 to phenylalanine 507 traverse the membrane as a helical segment.

The protein belongs to the CN hydrolase family. Apolipoprotein N-acyltransferase subfamily.

The protein resides in the cell inner membrane. It catalyses the reaction N-terminal S-1,2-diacyl-sn-glyceryl-L-cysteinyl-[lipoprotein] + a glycerophospholipid = N-acyl-S-1,2-diacyl-sn-glyceryl-L-cysteinyl-[lipoprotein] + a 2-acyl-sn-glycero-3-phospholipid + H(+). It functions in the pathway protein modification; lipoprotein biosynthesis (N-acyl transfer). Functionally, catalyzes the phospholipid dependent N-acylation of the N-terminal cysteine of apolipoprotein, the last step in lipoprotein maturation. This is Apolipoprotein N-acyltransferase from Neisseria meningitidis serogroup A / serotype 4A (strain DSM 15465 / Z2491).